A 97-amino-acid chain; its full sequence is Probable gamma-secretase subunit PEN-2 (97 aa).

At 1 to 20 (MLIPEDDKLDDEKMINIAKK) the chain is on the cytoplasmic side. Positions 21–39 (LWFIGFFFLPWVWLINILY) form an intramembrane region, helical. The Cytoplasmic portion of the chain corresponds to 40–55 (FIPYRNSLNDKVKWYL). A helical transmembrane segment spans residues 56-76 (KFSLIGFLGYSTIFMGWMGIY). The Lumenal portion of the chain corresponds to 77–97 (LVNRNKWGAFGDDISITIPFG).

It belongs to the PEN-2 family. The functional gamma-secretase complex is composed of at least four polypeptides: a presenilin homodimer, nicastrin, aph1 and psenen.

The protein resides in the endoplasmic reticulum membrane. Its subcellular location is the golgi apparatus. It localises to the golgi stack membrane. It is found in the cell membrane. The protein localises to the membrane. In terms of biological role, essential subunit of the gamma-secretase complex, an endoprotease complex that catalyzes the intramembrane cleavage of integral membrane proteins such as Notch receptors. The gamma-secretase complex plays a role in Notch and Wnt signaling cascades and regulation of downstream processes via its role in processing key regulatory proteins. This chain is Probable gamma-secretase subunit PEN-2 (psenen), found in Dictyostelium discoideum (Social amoeba).